Here is a 117-residue protein sequence, read N- to C-terminus: Ig heavy chain V region UPC10 (117 aa).

In terms of domain architecture, Ig-like spans 1 to 116 (EVKLLESGGG…WGQVTTLTVS (116 aa)).

The sequence is that of Ig heavy chain V region UPC10 from Mus musculus (Mouse).